A 237-amino-acid chain; its full sequence is MSQPIYKRILLKLSGEALQGEDGLGIDPAILDRMAVEIKELVEMGVEVGVVLGGGNLFRGAKLAKAGMNRVVGDHMGMLATVMNGLAMRDSLFRADVNAKLMSAFQLNGICDTYNWSEAIKMLREKRVVIFSAGTGNPFFTTDSTACLRGIEIEADVVLKATKVDGVYDCDPAKNPDAKLYKNLTYAEVIDKELQVMDLSAFTLARDHGMPIRVFNMGKPGALRQVVTGTEEGTTIC.

12 to 15 (KLSG) is an ATP binding site. An involved in allosteric activation by GTP region spans residues 20–25 (GEDGLG). Residue Gly-54 coordinates UMP. Residues Gly-55 and Arg-59 each contribute to the ATP site. UMP-binding positions include Asp-74 and 135–142 (TGNPFFTT). Residues Thr-162, Tyr-168, and Asp-171 each coordinate ATP.

Belongs to the UMP kinase family. Homohexamer.

It localises to the cytoplasm. It catalyses the reaction UMP + ATP = UDP + ADP. Its pathway is pyrimidine metabolism; CTP biosynthesis via de novo pathway; UDP from UMP (UMPK route): step 1/1. With respect to regulation, allosterically activated by GTP. Inhibited by UTP. Its function is as follows. Catalyzes the reversible phosphorylation of UMP to UDP. The sequence is that of Uridylate kinase from Haemophilus influenzae (strain PittGG).